The chain runs to 176 residues: Inorganic pyrophosphatase (176 aa).

Substrate contacts are provided by Lys30, Arg44, and Tyr56. Mg(2+) is bound by residues Asp66, Asp71, and Asp103. Tyr140 lines the substrate pocket.

Belongs to the PPase family. Homohexamer. Mg(2+) serves as cofactor.

The protein localises to the cytoplasm. The enzyme catalyses diphosphate + H2O = 2 phosphate + H(+). In terms of biological role, catalyzes the hydrolysis of inorganic pyrophosphate (PPi) forming two phosphate ions. This Methanothermobacter thermautotrophicus (strain ATCC 29096 / DSM 1053 / JCM 10044 / NBRC 100330 / Delta H) (Methanobacterium thermoautotrophicum) protein is Inorganic pyrophosphatase.